The sequence spans 297 residues: Thiosulfate sulfurtransferase (297 aa).

The residue at position 14 (K14) is an N6-acetyllysine; alternate. N6-succinyllysine; alternate is present on K14. The Rhodanese 1 domain occupies 25–143 (VGPGLRVLDA…WLKEGHPVTS (119 aa)). S35 is a glycosylation site (O-linked (GlcNAc) serine). S38 is modified (phosphoserine). The residue at position 136 (K136) is an N6-acetyllysine; alternate. K136 is subject to N6-succinyllysine; alternate. The interval 144–159 (EPSRPEPAIFKATLNR) is hinge. At K163 the chain carries N6-acetyllysine. One can recognise a Rhodanese 2 domain in the interval 173–288 (ESKRFQLVDS…WFHRAPPETW (116 aa)). Residue K175 is modified to N6-acetyllysine; alternate. K175 carries the post-translational modification N6-succinyllysine; alternate. R187 lines the substrate pocket. K224 is modified (N6-acetyllysine; alternate). N6-succinyllysine; alternate is present on K224. The residue at position 236 (K236) is an N6-acetyllysine. Position 237 is an N6-acetyllysine; alternate (K237). K237 carries the post-translational modification N6-succinyllysine; alternate. C248 functions as the Cysteine persulfide intermediate in the catalytic mechanism. A substrate-binding site is contributed by K250.

In terms of assembly, monomer. Expressed in numerous tissues.

It localises to the mitochondrion matrix. It catalyses the reaction thiosulfate + hydrogen cyanide = thiocyanate + sulfite + 2 H(+). Functionally, together with MRPL18, acts as a mitochondrial import factor for the cytosolic 5S rRNA. Only the nascent unfolded cytoplasmic form is able to bind to the 5S rRNA. Formation of iron-sulfur complexes and cyanide detoxification. Binds molecular oxygen and sulfur. This is Thiosulfate sulfurtransferase (TST) from Bos taurus (Bovine).